We begin with the raw amino-acid sequence, 218 residues long: Thiopurine S-methyltransferase (218 aa).

Positions 10, 45, 66, and 123 each coordinate S-adenosyl-L-methionine.

It belongs to the class I-like SAM-binding methyltransferase superfamily. TPMT family.

The protein resides in the cytoplasm. It carries out the reaction S-adenosyl-L-methionine + a thiopurine = S-adenosyl-L-homocysteine + a thiopurine S-methylether.. The polypeptide is Thiopurine S-methyltransferase (Pseudomonas paraeruginosa (strain DSM 24068 / PA7) (Pseudomonas aeruginosa (strain PA7))).